A 101-amino-acid polypeptide reads, in one-letter code: NAD(P)H-quinone oxidoreductase subunit 4L, chloroplastic (101 aa).

3 consecutive transmembrane segments (helical) span residues 2-22 (ILEH…YGLI), 32-52 (MCLE…SDFF), and 61-81 (IFCI…LAIV).

The protein belongs to the complex I subunit 4L family. In terms of assembly, NDH is composed of at least 16 different subunits, 5 of which are encoded in the nucleus.

It localises to the plastid. Its subcellular location is the chloroplast thylakoid membrane. The catalysed reaction is a plastoquinone + NADH + (n+1) H(+)(in) = a plastoquinol + NAD(+) + n H(+)(out). The enzyme catalyses a plastoquinone + NADPH + (n+1) H(+)(in) = a plastoquinol + NADP(+) + n H(+)(out). Its function is as follows. NDH shuttles electrons from NAD(P)H:plastoquinone, via FMN and iron-sulfur (Fe-S) centers, to quinones in the photosynthetic chain and possibly in a chloroplast respiratory chain. The immediate electron acceptor for the enzyme in this species is believed to be plastoquinone. Couples the redox reaction to proton translocation, and thus conserves the redox energy in a proton gradient. In Aethionema cordifolium (Lebanon stonecress), this protein is NAD(P)H-quinone oxidoreductase subunit 4L, chloroplastic.